The chain runs to 272 residues: HMP-PP phosphatase (272 aa).

D8 (nucleophile) is an active-site residue. D8, D10, and D212 together coordinate Mg(2+).

It belongs to the HAD-like hydrolase superfamily. Cof family. The cofactor is Mg(2+).

The catalysed reaction is 4-amino-2-methyl-5-(diphosphooxymethyl)pyrimidine + H2O = 4-amino-2-methyl-5-(phosphooxymethyl)pyrimidine + phosphate + H(+). Functionally, catalyzes the hydrolysis of 4-amino-2-methyl-5-hydroxymethylpyrimidine pyrophosphate (HMP-PP) to 4-amino-2-methyl-5-hydroxymethylpyrimidine phosphate (HMP-P). This Salmonella typhi protein is HMP-PP phosphatase.